A 298-amino-acid polypeptide reads, in one-letter code: Probable GTP 3',8-cyclase (298 aa).

The Radical SAM core domain occupies 4–221 (RYGREIRSFR…VFTRKFMQNR (218 aa)). Arg-13 serves as a coordination point for GTP. [4Fe-4S] cluster-binding residues include Cys-20 and Cys-24. Tyr-26 is an S-adenosyl-L-methionine binding site. Residue Cys-27 coordinates [4Fe-4S] cluster. Lys-61 contributes to the GTP binding site. Gly-65 contributes to the S-adenosyl-L-methionine binding site. GTP is bound at residue Thr-91. Ser-115 is an S-adenosyl-L-methionine binding site. Lys-152 contributes to the GTP binding site. [4Fe-4S] cluster is bound by residues Cys-243 and Cys-246. GTP is bound at residue 248–250 (RIR). Position 260 (Cys-260) interacts with [4Fe-4S] cluster.

This sequence belongs to the radical SAM superfamily. MoaA family. Requires [4Fe-4S] cluster as cofactor.

It carries out the reaction GTP + AH2 + S-adenosyl-L-methionine = (8S)-3',8-cyclo-7,8-dihydroguanosine 5'-triphosphate + 5'-deoxyadenosine + L-methionine + A + H(+). It participates in cofactor biosynthesis; molybdopterin biosynthesis. Its function is as follows. Catalyzes the cyclization of GTP to (8S)-3',8-cyclo-7,8-dihydroguanosine 5'-triphosphate. The sequence is that of Probable GTP 3',8-cyclase from Methanococcus maripaludis (strain C7 / ATCC BAA-1331).